A 387-amino-acid chain; its full sequence is Ferrochelatase (387 aa).

Residues His-196 and Glu-277 each coordinate Fe cation.

Belongs to the ferrochelatase family.

It localises to the cytoplasm. The enzyme catalyses heme b + 2 H(+) = protoporphyrin IX + Fe(2+). The protein operates within porphyrin-containing compound metabolism; protoheme biosynthesis; protoheme from protoporphyrin-IX: step 1/1. Catalyzes the ferrous insertion into protoporphyrin IX. The sequence is that of Ferrochelatase from Synechococcus elongatus (strain ATCC 33912 / PCC 7942 / FACHB-805) (Anacystis nidulans R2).